Consider the following 286-residue polypeptide: tRNA (guanine-N(7)-)-methyltransferase (286 aa).

Residues 1–22 (MGRARPKSQKRGDYRVSRSQEN) are disordered. S-adenosyl-L-methionine is bound by residues G104, 127 to 128 (EI), 162 to 163 (NS), and C182. D185 is an active-site residue. 260-262 (TEE) provides a ligand contact to S-adenosyl-L-methionine.

This sequence belongs to the class I-like SAM-binding methyltransferase superfamily. TrmB family. As to quaternary structure, forms a complex with TRM82.

Its subcellular location is the nucleus. It carries out the reaction guanosine(46) in tRNA + S-adenosyl-L-methionine = N(7)-methylguanosine(46) in tRNA + S-adenosyl-L-homocysteine. The protein operates within tRNA modification; N(7)-methylguanine-tRNA biosynthesis. Catalyzes the formation of N(7)-methylguanine at position 46 (m7G46) in tRNA. In Colletotrichum orbiculare (strain 104-T / ATCC 96160 / CBS 514.97 / LARS 414 / MAFF 240422) (Cucumber anthracnose fungus), this protein is tRNA (guanine-N(7)-)-methyltransferase.